Reading from the N-terminus, the 235-residue chain is Uridylate kinase (235 aa).

10–11 is an ATP binding site; the sequence is GS. Gly45 lines the UMP pocket. ATP is bound by residues Gly46 and Arg50. UMP is bound by residues Asp67 and 115 to 121; that span reads VTPGQTT. The ATP site is built by Thr141, Tyr147, and Asp150.

The protein belongs to the UMP kinase family. As to quaternary structure, homohexamer.

It is found in the cytoplasm. It catalyses the reaction UMP + ATP = UDP + ADP. The protein operates within pyrimidine metabolism; CTP biosynthesis via de novo pathway; UDP from UMP (UMPK route): step 1/1. Its activity is regulated as follows. Inhibited by UTP. Catalyzes the reversible phosphorylation of UMP to UDP. The sequence is that of Uridylate kinase from Methanocorpusculum labreanum (strain ATCC 43576 / DSM 4855 / Z).